The sequence spans 338 residues: Ketol-acid reductoisomerase (NADP(+)) (338 aa).

Residues 1-181 enclose the KARI N-terminal Rossmann domain; the sequence is MKVYYDKDAD…GGTKGGVIET (181 aa). Residues 24 to 27, R47, and S52 contribute to the NADP(+) site; that span reads YGSQ. The active site involves H107. NADP(+) is bound at residue G133. The KARI C-terminal knotted domain maps to 182-327; sequence NFREETETDL…SQLRAMMPWI (146 aa). Residues D190, E194, E226, and E230 each contribute to the Mg(2+) site. A substrate-binding site is contributed by S251.

This sequence belongs to the ketol-acid reductoisomerase family. Mg(2+) is required as a cofactor.

It catalyses the reaction (2R)-2,3-dihydroxy-3-methylbutanoate + NADP(+) = (2S)-2-acetolactate + NADPH + H(+). The catalysed reaction is (2R,3R)-2,3-dihydroxy-3-methylpentanoate + NADP(+) = (S)-2-ethyl-2-hydroxy-3-oxobutanoate + NADPH + H(+). It functions in the pathway amino-acid biosynthesis; L-isoleucine biosynthesis; L-isoleucine from 2-oxobutanoate: step 2/4. The protein operates within amino-acid biosynthesis; L-valine biosynthesis; L-valine from pyruvate: step 2/4. In terms of biological role, involved in the biosynthesis of branched-chain amino acids (BCAA). Catalyzes an alkyl-migration followed by a ketol-acid reduction of (S)-2-acetolactate (S2AL) to yield (R)-2,3-dihydroxy-isovalerate. In the isomerase reaction, S2AL is rearranged via a Mg-dependent methyl migration to produce 3-hydroxy-3-methyl-2-ketobutyrate (HMKB). In the reductase reaction, this 2-ketoacid undergoes a metal-dependent reduction by NADPH to yield (R)-2,3-dihydroxy-isovalerate. The chain is Ketol-acid reductoisomerase (NADP(+)) from Methylobacillus flagellatus (strain ATCC 51484 / DSM 6875 / VKM B-1610 / KT).